A 234-amino-acid polypeptide reads, in one-letter code: Ubiquinone biosynthesis O-methyltransferase (234 aa).

Residues Arg-36, Gly-56, Asp-77, and Met-125 each coordinate S-adenosyl-L-methionine.

The protein belongs to the methyltransferase superfamily. UbiG/COQ3 family.

The enzyme catalyses a 3-demethylubiquinol + S-adenosyl-L-methionine = a ubiquinol + S-adenosyl-L-homocysteine + H(+). It catalyses the reaction a 3-(all-trans-polyprenyl)benzene-1,2-diol + S-adenosyl-L-methionine = a 2-methoxy-6-(all-trans-polyprenyl)phenol + S-adenosyl-L-homocysteine + H(+). The protein operates within cofactor biosynthesis; ubiquinone biosynthesis. Its function is as follows. O-methyltransferase that catalyzes the 2 O-methylation steps in the ubiquinone biosynthetic pathway. The sequence is that of Ubiquinone biosynthesis O-methyltransferase from Actinobacillus pleuropneumoniae serotype 7 (strain AP76).